The chain runs to 160 residues: Putative UPF0479 protein YLR466C-A (160 aa).

A run of 2 helical transmembrane segments spans residues 39–59 (IVFC…KVLQ) and 136–156 (VPMI…ISQH).

Belongs to the UPF0479 family.

Its subcellular location is the membrane. The protein is Putative UPF0479 protein YLR466C-A of Saccharomyces cerevisiae (strain ATCC 204508 / S288c) (Baker's yeast).